The primary structure comprises 112 residues: Mediator of RNA polymerase II transcription subunit 22 (112 aa).

Residues 83–112 form a disordered region; that stretch reads KPEDGGEGQLADELLDKIEDTSDGVDKETA. Residues 96–112 show a composition bias toward basic and acidic residues; sequence LLDKIEDTSDGVDKETA.

It belongs to the Mediator complex subunit 22 family. As to quaternary structure, component of the Mediator complex.

The protein resides in the nucleus. Functionally, component of the Mediator complex, a coactivator involved in the regulated transcription of nearly all RNA polymerase II-dependent genes. Mediator functions as a bridge to convey information from gene-specific regulatory proteins to the basal RNA polymerase II transcription machinery. Mediator is recruited to promoters by direct interactions with regulatory proteins and serves as a scaffold for the assembly of a functional preinitiation complex with RNA polymerase II and the general transcription factors. The sequence is that of Mediator of RNA polymerase II transcription subunit 22 (SRB6) from Yarrowia lipolytica (strain CLIB 122 / E 150) (Yeast).